Here is a 115-residue protein sequence, read N- to C-terminus: LSM complex subunit LSM7 (115 aa).

Positions 1-10 (MHQQHSKSEN) are enriched in basic and acidic residues. The segment at 1 to 23 (MHQQHSKSENKPQQQRKKFEGPK) is disordered. The 84-residue stretch at 25–108 (EAILDLAKYK…LVSLSSAEGS (84 aa)) folds into the Sm domain.

This sequence belongs to the snRNP Sm proteins family. As to quaternary structure, component of the heptameric LSM1-LSM7 complex that forms a seven-membered ring structure with a donut shape. The LSm subunits are arranged in the order LSM1, LSM2, LSM3, LSM6, LSM5, LSM7 and LSM4. Except for LSM1, where a C-terminal helix crosses the ring structure to form additional interactions with LSM3 and LSM6, each subunit interacts only with its two neighboring subunits. The LSM1-LSM7 complex interacts with PAT1; within the complex PAT1 has direct interactions with LSM2 and LSM3. The LSM1-LSM7 complex interacts with XRN1. Component of the heptameric LSM2-LSM8 complex that forms a seven-membered ring structure with a donut shape; an RNA strand can pass through the hole in the center of the ring structure. The LSm subunits are arranged in the order LSM8, LSM2, LSM3, LSM6, LSM5, LSM7 and LSM4. Component of the spliceosome U4/U6-U5 tri-snRNP complex composed of the U4, U6 and U5 snRNAs and at least PRP3, PRP4, PRP6, PRP8, PRP18, PRP31, PRP38, SNU13, SNU23, SNU66, SNU114, SPP381, SMB1, SMD1, SMD2, SMD3, SMX2, SMX3, LSM2, LSM3, LSM4, LSM5, LSM6, LSM7, LSM8, BRR2 and DIB1. May be found in a complex comprising LSM2-LSM7 without LSM1 or LSM8; the complex associates with pre-P RNA and snoRNA SNR5.

Its subcellular location is the nucleus. The protein localises to the nucleolus. The protein resides in the cytoplasm. Its function is as follows. Component of LSm protein complexes, which are involved in RNA processing and may function in a chaperone-like manner. Component of the cytoplasmic LSM1-LSM7 complex which is involved in mRNA degradation by activating the decapping step. Together with PAT1, the LSM1-LSM7 complex binds to osmotic stress-activated mRNAs to attenuate the osmotic stress response, probably by limiting ribosome access to the mRNA and consequently translation. Component of the nuclear LSM2-LSM8 complex, which is involved in spliceosome assembly. The LSM2-LSM8 complex plays a role in the biogenesis of the spliceosomal U4/U6-U5 tri-snRNP complex by accelerating PRP24-mediated annealing of U4/U6 di-snRNA. The LSM2-LSM8 complex binds U6 snRNA terminating with a non-cyclic 3' phosphate group. LSM2-LSM8 is probably also involved in degradation of nuclear pre-mRNA by targeting them for decapping. LSM2-LSM8 could be involved in processing of pre-tRNAs, pre-rRNAs and U3 snoRNA, although involvement may be indirect. In a complex that probably contains LSM2-LSM7, but not LSM1 or LSM8, associates with the precursor of the RNA component of RNase P (pre-P RNA) and may be involved in maturing pre-P RNA; the complex also associates with snoRNA SNR5. This chain is LSM complex subunit LSM7 (LSM7), found in Saccharomyces cerevisiae (strain ATCC 204508 / S288c) (Baker's yeast).